The sequence spans 328 residues: MKAPVRVAVTGAAGQIGYALLFRIASGEMLGKDQPVILQLLELSNEKAQAALKGVMMELEDCAFPLLAGMVGTDDAEVAFKDIDVALLVGARPRGPGMERKDLLLENAKIFTAQGAALNKVAKRDVKVLVVGNPANTNAYIAMKSAPDLNPKNFTAMLRLDHNRALSQLSLKLGKPVGGIEKLVVWGNHSPTMYPDYRFATSDGASIGDAINDQEWNAGTFIPTVGKRGAAIIEARGLSSAASAANAAIDHVRDWVLGSNGKWVTMGVPSDGSYGIPEGVIFGFPVTTENGQYTLVKDLPIDDFSQKYIDKTLAELEEERSGVSHLLG.

An NAD(+)-binding site is contributed by 11–17 (GAAGQIG). The substrate site is built by Arg94 and Arg100. Residues Asn107, Gln114, and 131–133 (VGN) contribute to the NAD(+) site. Asn133 and Arg164 together coordinate substrate. His189 serves as the catalytic Proton acceptor.

Belongs to the LDH/MDH superfamily. MDH type 2 family.

It carries out the reaction (S)-malate + NAD(+) = oxaloacetate + NADH + H(+). Catalyzes the reversible oxidation of malate to oxaloacetate. This chain is Malate dehydrogenase, found in Xanthomonas campestris pv. campestris (strain 8004).